The sequence spans 157 residues: MSKPVILTYEGLKKLEEELEYLKTVKRAEVAEKIKQARAFGDLSENSEYDEAKNEQAFIEGRIATLEAMLKNAKVIDEEDIKLDEVSIGCTVKVFDETYNEEVEYTIVGSAEADPMNNKISDESPIGKALLGKKVGETISVEVPAGVIKLKILEIRR.

The stretch at 12–74 (LKKLEEELEY…TLEAMLKNAK (63 aa)) forms a coiled coil.

This sequence belongs to the GreA/GreB family.

Its function is as follows. Necessary for efficient RNA polymerase transcription elongation past template-encoded arresting sites. The arresting sites in DNA have the property of trapping a certain fraction of elongating RNA polymerases that pass through, resulting in locked ternary complexes. Cleavage of the nascent transcript by cleavage factors such as GreA or GreB allows the resumption of elongation from the new 3'terminus. GreA releases sequences of 2 to 3 nucleotides. The protein is Transcription elongation factor GreA of Caldanaerobacter subterraneus subsp. tengcongensis (strain DSM 15242 / JCM 11007 / NBRC 100824 / MB4) (Thermoanaerobacter tengcongensis).